The sequence spans 860 residues: DNA mismatch repair protein MutS (860 aa).

607 to 614 (GPNMSGKS) contributes to the ATP binding site.

This sequence belongs to the DNA mismatch repair MutS family.

This protein is involved in the repair of mismatches in DNA. It is possible that it carries out the mismatch recognition step. This protein has a weak ATPase activity. In Listeria monocytogenes serotype 4b (strain CLIP80459), this protein is DNA mismatch repair protein MutS.